We begin with the raw amino-acid sequence, 145 residues long: Large ribosomal subunit protein uL13 (145 aa).

This sequence belongs to the universal ribosomal protein uL13 family. Part of the 50S ribosomal subunit.

This protein is one of the early assembly proteins of the 50S ribosomal subunit, although it is not seen to bind rRNA by itself. It is important during the early stages of 50S assembly. The chain is Large ribosomal subunit protein uL13 from Bacillus cereus (strain G9842).